Reading from the N-terminus, the 303-residue chain is Glutamyl-Q tRNA(Asp) synthetase (303 aa).

L-glutamate-binding positions include 16–20 and glutamate 52; that span reads RFAPS. The short motif at 19–29 is the 'HIGH' region element; it reads PSPSGPLHFGS. Zn(2+) contacts are provided by cysteine 108, cysteine 110, tyrosine 122, and cysteine 126. Tyrosine 177 and arginine 195 together coordinate L-glutamate. Positions 233 to 237 match the 'KMSKS' region motif; it reads KLSKQ. Lysine 236 lines the ATP pocket.

Belongs to the class-I aminoacyl-tRNA synthetase family. GluQ subfamily. Zn(2+) serves as cofactor.

Functionally, catalyzes the tRNA-independent activation of glutamate in presence of ATP and the subsequent transfer of glutamate onto a tRNA(Asp). Glutamate is transferred on the 2-amino-5-(4,5-dihydroxy-2-cyclopenten-1-yl) moiety of the queuosine in the wobble position of the QUC anticodon. This chain is Glutamyl-Q tRNA(Asp) synthetase, found in Vibrio vulnificus (strain YJ016).